A 472-amino-acid chain; its full sequence is Serine incorporator 3 (472 aa).

Residues 1 to 96 (MGAVLGVFSL…KDCDVLVGFK (96 aa)) are Extracellular-facing. A glycan (N-linked (GlcNAc...) asparagine) is linked at Asn-34. A helical membrane pass occupies residues 97-117 (AVYRINFAVAIFFFAFFLLML). Over 118–132 (KVKTSKDPRAAVHNG) the chain is Cytoplasmic. Residues 133-153 (FWFFKIAAIIGIMIGSFYIPG) form a helical membrane-spanning segment. The Extracellular portion of the chain corresponds to 154–158 (GSFTE). Residues 159–179 (VWFVAGMLGASFFIIIQLVLL) traverse the membrane as a helical segment. Residues 180 to 206 (VDMAHSWNELWVNRMEEGNPRLWYAAL) are Cytoplasmic-facing. The helical transmembrane segment at 207–227 (LSFTSLFYILSIVFAALLYVF) threads the bilayer. The Extracellular segment spans residues 228 to 238 (YTKPDDCTENK). A helical transmembrane segment spans residues 239 to 259 (VFISLNLIFCVAVSIVSILPK). At 260 to 329 (VQEHQPRSGL…APAYAPPSQS (70 aa)) the chain is on the cytoplasmic side. The chain crosses the membrane as a helical span at residues 330–350 (GHFMNLDDIWGLIIFVFCLIY). Residues 351–405 (SSFRTSSNSQVNKLTLSGSDSVILGDTTNGANDEEDGQPRRAVDNEKEGVQYSYS) lie on the Extracellular side of the membrane. The residue at position 371 (Ser-371) is a Phosphoserine. A helical membrane pass occupies residues 406–426 (FFHLMLCCASLYIMMTITSWY). Residues 427–445 (SPDAKFQKVSSKWLAVWFK) lie on the Cytoplasmic side of the membrane. A helical transmembrane segment spans residues 446–466 (MGSSWLCLLLYLWTLVAPLVL). The Extracellular portion of the chain corresponds to 467–472 (TGRDFS).

Belongs to the TDE1 family. N-glycosylated. In terms of tissue distribution, highly expressed in the neuronal populations such as Purkinje cells in the cerebellum, brainstem and spinal motor neurons, locus coeruleus and raphe nuclei. Highly expressed also in thymus, kidney liver and testis.

It localises to the cell membrane. It is found in the golgi apparatus membrane. The catalysed reaction is a 1,2-diacyl-sn-glycero-3-phospho-L-serine(in) = a 1,2-diacyl-sn-glycero-3-phospho-L-serine(out). It catalyses the reaction a 1,2-diacyl-sn-glycero-3-phosphocholine(in) = a 1,2-diacyl-sn-glycero-3-phosphocholine(out). It carries out the reaction a 1,2-diacyl-sn-glycero-3-phosphoethanolamine(in) = a 1,2-diacyl-sn-glycero-3-phosphoethanolamine(out). In terms of biological role, restriction factor required to restrict infectivity of gammaretroviruses: acts by inhibiting an early step of viral infection. Impairs the penetration of the viral particle into the cytoplasm. Non-ATP-dependent, non-specific lipid transporter for phosphatidylserine, phosphatidylcholine, and phosphatidylethanolamine. Functions as a scramblase that flips lipids in both directions across the membrane. Phospholipid scrambling results in gammaretroviral surface exposure of phosphatidylserine and loss of membrane asymmetry, which leads to loss of infectivity. This Mus musculus (Mouse) protein is Serine incorporator 3 (Serinc3).